Reading from the N-terminus, the 276-residue chain is UDP-3-O-acyl-N-acetylglucosamine deacetylase (276 aa).

Histidine 76, histidine 234, and aspartate 238 together coordinate Zn(2+). Histidine 261 serves as the catalytic Proton donor.

Belongs to the LpxC family. Zn(2+) serves as cofactor.

The catalysed reaction is a UDP-3-O-[(3R)-3-hydroxyacyl]-N-acetyl-alpha-D-glucosamine + H2O = a UDP-3-O-[(3R)-3-hydroxyacyl]-alpha-D-glucosamine + acetate. Its pathway is glycolipid biosynthesis; lipid IV(A) biosynthesis; lipid IV(A) from (3R)-3-hydroxytetradecanoyl-[acyl-carrier-protein] and UDP-N-acetyl-alpha-D-glucosamine: step 2/6. Catalyzes the hydrolysis of UDP-3-O-myristoyl-N-acetylglucosamine to form UDP-3-O-myristoylglucosamine and acetate, the committed step in lipid A biosynthesis. In Synechocystis sp. (strain ATCC 27184 / PCC 6803 / Kazusa), this protein is UDP-3-O-acyl-N-acetylglucosamine deacetylase.